The following is a 211-amino-acid chain: Adenylyl-sulfate kinase (211 aa).

32 to 39 (GLSASGKS) is a binding site for ATP. Catalysis depends on S107, which acts as the Phosphoserine intermediate.

Belongs to the APS kinase family. As to quaternary structure, homodimer.

The enzyme catalyses adenosine 5'-phosphosulfate + ATP = 3'-phosphoadenylyl sulfate + ADP + H(+). The protein operates within sulfur metabolism; hydrogen sulfide biosynthesis; sulfite from sulfate: step 2/3. Catalyzes the synthesis of activated sulfate. This chain is Adenylyl-sulfate kinase, found in Penicillium chrysogenum (Penicillium notatum).